Reading from the N-terminus, the 217-residue chain is MLO-like protein (217 aa).

The next 3 membrane-spanning stretches (helical) occupy residues 35–55 (FKVV…FLLS), 59–79 (GWVA…VVGT), and 119–139 (LVLF…AFFI).

Belongs to the MLO family.

Its subcellular location is the membrane. Its function is as follows. May be involved in modulation of pathogen defense and leaf cell death. The polypeptide is MLO-like protein (Linum usitatissimum (Flax)).